A 558-amino-acid chain; its full sequence is Formate--tetrahydrofolate ligase (558 aa).

67-74 is a binding site for ATP; that stretch reads TPAGEGKT.

This sequence belongs to the formate--tetrahydrofolate ligase family.

It carries out the reaction (6S)-5,6,7,8-tetrahydrofolate + formate + ATP = (6R)-10-formyltetrahydrofolate + ADP + phosphate. Its pathway is one-carbon metabolism; tetrahydrofolate interconversion. In Roseobacter denitrificans (strain ATCC 33942 / OCh 114) (Erythrobacter sp. (strain OCh 114)), this protein is Formate--tetrahydrofolate ligase.